A 633-amino-acid polypeptide reads, in one-letter code: Guanylate-binding protein 6 (633 aa).

The tract at residues 1-310 is GTPase domain (Globular); the sequence is MESGPKMLAP…EAVNSGAVPC (310 aa). One can recognise a GB1/RHD3-type G domain in the interval 35–277; the sequence is SQPVVVVAIV…FSSYIFTHAR (243 aa). GTP-binding positions include 45-52, 67-69, and 97-101; these read GLYRTGKS, LGS, and DTEGL.

Belongs to the TRAFAC class dynamin-like GTPase superfamily. GB1/RHD3 GTPase family. GB1 subfamily.

Its subcellular location is the cytoplasmic vesicle. It carries out the reaction GTP + H2O = GDP + phosphate + H(+). Its function is as follows. Interferon (IFN)-inducible GTPase that plays important roles in innate immunity against a diverse range of bacterial, viral and protozoan pathogens, such as bacterial pathogens Listeria monocytogenes and Mycobacterium bovis BCG as well as the protozoan pathogen Toxoplasma gondii. Confers protection to several pathogens, including the bacterial pathogens Listeria monocytogenes and Mycobacterium bovis BCG as well as the protozoan pathogen Toxoplasma gondii. This Pongo abelii (Sumatran orangutan) protein is Guanylate-binding protein 6 (GBP6).